Reading from the N-terminus, the 454-residue chain is Putative tyrosine kinase 36 (454 aa).

Residues 80–88 and K98 contribute to the ATP site; that span reads LGSGSFGKV. D192 serves as the catalytic Proton acceptor.

This sequence belongs to the protein kinase superfamily. Tyr protein kinase family.

It carries out the reaction L-tyrosyl-[protein] + ATP = O-phospho-L-tyrosyl-[protein] + ADP + H(+). The sequence is that of Putative tyrosine kinase 36 (36) from Alcelaphine herpesvirus 1 (strain C500) (AlHV-1).